A 351-amino-acid chain; its full sequence is Modulator of apoptosis 1 (351 aa).

The LIR signature appears at 49-52 (YRLL). Positions 120–127 (LSRALGHE) are BH3-like. The interval 202–205 (KRRR) is RASSF1-binding.

It belongs to the PNMA family. Homodimer. Under normal circumstances, held in an inactive conformation by an intramolecular interaction. Interacts with BAX. Binding to RASSF1 isoform A (RASSF1A) relieves this inhibitory interaction and allows further binding to BAX. Also binds to BCL2 and BCLX. Recruited to the TNFRSF1A and TNFRSF10A complexes in response to their respective cognate ligand, after internalization. Interacts with TRIM39. Interacts with RASSF6. Interacts with ATG8 proteins MAP1LC3A, MAP1LC3B and MAP1LC3C. Does not interact with ATG8 proteins GABARAPL1, GABARAPL2 and GABARAP. Interacts with SQSTM1; promoting dissociation of SQSTM1 inclusion bodies that sequester KEAP1. Post-translationally, ubiquitinated and degraded during mitotic exit by APC/C-Cdh1, this modification is inhibited by TRIM39. In terms of tissue distribution, widely expressed, with high levels in heart and brain.

It is found in the cytoplasm. It localises to the cytosol. Its subcellular location is the mitochondrion outer membrane. The protein localises to the extracellular vesicle membrane. Functionally, retrotransposon-derived protein that forms virion-like capsids. Acts as an effector of BAX during apoptosis: enriched at outer mitochondria membrane and associates with BAX upon induction of apoptosis, facilitating BAX-dependent mitochondrial outer membrane permeabilization and apoptosis. Required for death receptor-dependent apoptosis. When associated with RASSF1, promotes BAX conformational change and translocation to mitochondrial membranes in response to TNF and TNFSF10 stimulation. Also promotes autophagy: promotes phagophore closure via association with ATG8 proteins. Acts as an inhibitor of the NFE2L2/NRF2 pathway via interaction with SQSTM1: interaction promotes dissociation of SQSTM1 inclusion bodies that sequester KEAP1, relieving inactivation of the BCR(KEAP1) complex. The sequence is that of Modulator of apoptosis 1 from Homo sapiens (Human).